We begin with the raw amino-acid sequence, 199 residues long: MRAAGLGLGIGLLLLAALAGPGGSAEQGGVPAKKLRMAYATGPLLKFQICVSUGYRRVFEEYMRVISQRYPDIRIEGENYLPQPIYRHIASFLSVFKLVLIGLIIVGKDPFAFFGMQAPSIWQWGQENKVYACMMVFFLSNMIENQCMSTGAFEITLNDVPVWSKLESGHLPSMQQLVQILDNEMKLNVHMESMPHHRS.

Residues 1–24 (MRAAGLGLGIGLLLLAALAGPGGS) form the signal peptide. The segment at residues 50 to 53 (CVSU) is a cross-link (cysteinyl-selenocysteine (Cys-Sec)). Residue Sec-53 is a non-standard amino acid, selenocysteine. The helical transmembrane segment at 95–115 (VFKLVLIGLIIVGKDPFAFFG) threads the bilayer.

Belongs to the SelWTH family. Selenoprotein T subfamily. May contain a selenide-sulfide bond between Cys-50 and Sec-53. This bond is speculated to serve as redox-active pair.

The protein localises to the endoplasmic reticulum membrane. The catalysed reaction is [thioredoxin]-dithiol + NADP(+) = [thioredoxin]-disulfide + NADPH + H(+). In terms of biological role, selenoprotein with thioredoxin reductase-like oxidoreductase activity. The sequence is that of Thioredoxin reductase-like selenoprotein T from Gallus gallus (Chicken).